The sequence spans 261 residues: Indole-3-glycerol phosphate synthase (261 aa).

This sequence belongs to the TrpC family.

The enzyme catalyses 1-(2-carboxyphenylamino)-1-deoxy-D-ribulose 5-phosphate + H(+) = (1S,2R)-1-C-(indol-3-yl)glycerol 3-phosphate + CO2 + H2O. Its pathway is amino-acid biosynthesis; L-tryptophan biosynthesis; L-tryptophan from chorismate: step 4/5. The polypeptide is Indole-3-glycerol phosphate synthase (Burkholderia pseudomallei (strain 668)).